The chain runs to 316 residues: Ribosomal protein L11 methyltransferase (316 aa).

Residues Thr157, Gly178, Asp200, and Asn243 each coordinate S-adenosyl-L-methionine.

The protein belongs to the methyltransferase superfamily. PrmA family.

The protein resides in the cytoplasm. It catalyses the reaction L-lysyl-[protein] + 3 S-adenosyl-L-methionine = N(6),N(6),N(6)-trimethyl-L-lysyl-[protein] + 3 S-adenosyl-L-homocysteine + 3 H(+). Methylates ribosomal protein L11. This is Ribosomal protein L11 methyltransferase from Streptococcus pneumoniae serotype 2 (strain D39 / NCTC 7466).